A 120-amino-acid polypeptide reads, in one-letter code: Large ribosomal subunit protein uL18 (120 aa).

This sequence belongs to the universal ribosomal protein uL18 family. As to quaternary structure, part of the 50S ribosomal subunit; part of the 5S rRNA/L5/L18/L25 subcomplex. Contacts the 5S and 23S rRNAs.

Its function is as follows. This is one of the proteins that bind and probably mediate the attachment of the 5S RNA into the large ribosomal subunit, where it forms part of the central protuberance. In Rhodospirillum rubrum (strain ATCC 11170 / ATH 1.1.1 / DSM 467 / LMG 4362 / NCIMB 8255 / S1), this protein is Large ribosomal subunit protein uL18.